A 95-amino-acid polypeptide reads, in one-letter code: Aspartyl/glutamyl-tRNA(Asn/Gln) amidotransferase subunit C (95 aa).

This sequence belongs to the GatC family. As to quaternary structure, heterotrimer of A, B and C subunits.

It catalyses the reaction L-glutamyl-tRNA(Gln) + L-glutamine + ATP + H2O = L-glutaminyl-tRNA(Gln) + L-glutamate + ADP + phosphate + H(+). The catalysed reaction is L-aspartyl-tRNA(Asn) + L-glutamine + ATP + H2O = L-asparaginyl-tRNA(Asn) + L-glutamate + ADP + phosphate + 2 H(+). Allows the formation of correctly charged Asn-tRNA(Asn) or Gln-tRNA(Gln) through the transamidation of misacylated Asp-tRNA(Asn) or Glu-tRNA(Gln) in organisms which lack either or both of asparaginyl-tRNA or glutaminyl-tRNA synthetases. The reaction takes place in the presence of glutamine and ATP through an activated phospho-Asp-tRNA(Asn) or phospho-Glu-tRNA(Gln). The sequence is that of Aspartyl/glutamyl-tRNA(Asn/Gln) amidotransferase subunit C from Maricaulis maris (strain MCS10) (Caulobacter maris).